Reading from the N-terminus, the 285-residue chain is Pyrroline-5-carboxylate reductase (285 aa).

Belongs to the pyrroline-5-carboxylate reductase family. Homotetramer.

It carries out the reaction L-proline + NADP(+) = (S)-1-pyrroline-5-carboxylate + NADPH + 2 H(+). The enzyme catalyses L-proline + NAD(+) = (S)-1-pyrroline-5-carboxylate + NADH + 2 H(+). It functions in the pathway amino-acid biosynthesis; L-proline biosynthesis; L-proline from L-glutamate 5-semialdehyde: step 1/1. This is Pyrroline-5-carboxylate reductase from Kluyveromyces lactis (strain ATCC 8585 / CBS 2359 / DSM 70799 / NBRC 1267 / NRRL Y-1140 / WM37) (Yeast).